Consider the following 293-residue polypeptide: Probable E3 ubiquitin-protein ligase RNF144A-B (293 aa).

Residues 16–237 form a TRIAD supradomain region; that stretch reads PLLSCKLCLG…YDKGPCRNKL (222 aa). Zn(2+) contacts are provided by Cys-20, Cys-23, Cys-43, Cys-46, Cys-111, Cys-116, Cys-135, Cys-138, Cys-143, Cys-146, His-151, Cys-156, Cys-186, and Cys-189. The RING-type 1 zinc finger occupies 20-70; it reads CKLCLGEFPLEQMTTISQCQCIFCSLCLKQYVELLIKEGLETAISCPDSAC. The IBR-type zinc finger occupies 91 to 156; that stretch reads QHYKRLQFER…RADCHTGQAC (66 aa). The RING-type 2; atypical zinc finger occupies 186–215; that stretch reads CPKCKVYIERDEGCAQMMCKNCKHAFCWYC. The active site involves Cys-199. The Zn(2+) site is built by Cys-204, Cys-207, Cys-212, Cys-215, His-227, and Cys-233. Residues 251–271 form a helical membrane-spanning segment; it reads VVGIFAGFGLLLLVASPFLLL.

Belongs to the RBR family. RNF144 subfamily.

Its subcellular location is the membrane. The catalysed reaction is [E2 ubiquitin-conjugating enzyme]-S-ubiquitinyl-L-cysteine + [acceptor protein]-L-lysine = [E2 ubiquitin-conjugating enzyme]-L-cysteine + [acceptor protein]-N(6)-ubiquitinyl-L-lysine.. The protein operates within protein modification; protein ubiquitination. Functionally, E3 ubiquitin-protein ligase which accepts ubiquitin from E2 ubiquitin-conjugating enzymes ube2l3 and ube2l6 in the form of a thioester and then directly transfers the ubiquitin to targeted substrates. The chain is Probable E3 ubiquitin-protein ligase RNF144A-B (rnf144ab) from Danio rerio (Zebrafish).